A 319-amino-acid chain; its full sequence is Transmembrane protein 121 (319 aa).

Transmembrane regions (helical) follow at residues 10-30 (HVCLTTLVIMGSMAVMDAYLV), 43-63 (IIVLVGDVCFLLVLRYVAVWV), 74-94 (YAMILWFLYIFVLEIKLYFIF), 112-132 (ALTLLLSVCVPGLFLLLVALD), 150-170 (LFWVALDLLDLLDMQASLWEP), 174-194 (GLPLWAEGLTFFYCYMLLLVL), and 214-234 (MMLYPVLSLATVNVVAVLARA). Residues 277–306 (PALSLELQPPPPQRNSVPPPPPPLHGPPGR) are compositionally biased toward pro residues. A disordered region spans residues 277 to 319 (PALSLELQPPPPQRNSVPPPPPPLHGPPGRPHMSSPTRDPLDT).

The protein belongs to the TMEM121 family. Highly expressed in heart and detected in pancreas, liver and skeletal muscle.

Its subcellular location is the membrane. In terms of biological role, may play a role in MAPK signaling. The chain is Transmembrane protein 121 (TMEM121) from Homo sapiens (Human).